The chain runs to 170 residues: Photosystem I assembly protein Ycf3 (170 aa).

3 TPR repeats span residues 35–68 (AFCYYRDGMSAQSEGEYAEALENYYEALRLEEDP), 72–105 (SYIIYNIGLIYASNGEHIKALEYYHQSLELNPRL), and 120–153 (GLKAADKQDNNMSKSMFDKAAEYWKQAIYLAPNN).

This sequence belongs to the Ycf3 family.

The protein resides in the plastid. It localises to the chloroplast thylakoid membrane. Essential for the assembly of the photosystem I (PSI) complex. May act as a chaperone-like factor to guide the assembly of the PSI subunits. In Gracilaria tenuistipitata var. liui (Red alga), this protein is Photosystem I assembly protein Ycf3.